We begin with the raw amino-acid sequence, 368 residues long: Alanine racemase 3 (368 aa).

Lys-42 (proton acceptor; specific for D-alanine) is an active-site residue. Lys-42 bears the N6-(pyridoxal phosphate)lysine mark. Arg-141 serves as a coordination point for substrate. Catalysis depends on Tyr-262, which acts as the Proton acceptor; specific for L-alanine. Met-310 serves as a coordination point for substrate.

The protein belongs to the alanine racemase family. Pyridoxal 5'-phosphate serves as cofactor.

The enzyme catalyses L-alanine = D-alanine. The protein operates within amino-acid biosynthesis; D-alanine biosynthesis; D-alanine from L-alanine: step 1/1. Its function is as follows. Catalyzes the interconversion of L-alanine and D-alanine. May also act on other amino acids. This is Alanine racemase 3 (alr3) from Salmonella typhi.